Reading from the N-terminus, the 78-residue chain is Large ribosomal subunit protein bL28 (78 aa).

This sequence belongs to the bacterial ribosomal protein bL28 family.

This Escherichia coli O139:H28 (strain E24377A / ETEC) protein is Large ribosomal subunit protein bL28.